A 245-amino-acid polypeptide reads, in one-letter code: Aliphatic sulfonates import ATP-binding protein SsuB 1 (245 aa).

One can recognise an ABC transporter domain in the interval leucine 9–tryptophan 227. An ATP-binding site is contributed by glycine 41–serine 48.

This sequence belongs to the ABC transporter superfamily. Aliphatic sulfonates importer (TC 3.A.1.17.2) family. As to quaternary structure, the complex is composed of two ATP-binding proteins (SsuB), two transmembrane proteins (SsuC) and a solute-binding protein (SsuA).

It is found in the cell membrane. It catalyses the reaction ATP + H2O + aliphatic sulfonate-[sulfonate-binding protein]Side 1 = ADP + phosphate + aliphatic sulfonateSide 2 + [sulfonate-binding protein]Side 1.. In terms of biological role, part of the ABC transporter complex SsuABC involved in aliphatic sulfonates import. Responsible for energy coupling to the transport system. In Rhodococcus jostii (strain RHA1), this protein is Aliphatic sulfonates import ATP-binding protein SsuB 1.